Reading from the N-terminus, the 489-residue chain is Lysine--tRNA ligase (489 aa).

The Mg(2+) site is built by E399 and E406.

This sequence belongs to the class-II aminoacyl-tRNA synthetase family. As to quaternary structure, homodimer. Mg(2+) serves as cofactor.

The protein resides in the cytoplasm. The enzyme catalyses tRNA(Lys) + L-lysine + ATP = L-lysyl-tRNA(Lys) + AMP + diphosphate. This chain is Lysine--tRNA ligase, found in Roseiflexus castenholzii (strain DSM 13941 / HLO8).